The following is a 97-amino-acid chain: Small ribosomal subunit protein bS20 (97 aa).

Belongs to the bacterial ribosomal protein bS20 family.

Functionally, binds directly to 16S ribosomal RNA. The polypeptide is Small ribosomal subunit protein bS20 (Prochlorococcus marinus (strain MIT 9312)).